A 193-amino-acid polypeptide reads, in one-letter code: MAVHLTRIYTRTGDDGTTGLSDMSRVAKTDARLVAYADCDEANAAIGAALALGHPDTQITDVLRQIQNDLFDAGADLSTPIVENPKHPPLRIAQSYIDRLEGWCDAYNAGLPALKSFVLPGGSPLSALLHVARTVVRRAERSAWAAVDAHPEGVSVLPAKYLNRLSDLLFILSRVANPDGDVLWRPGGDRTAS.

Residues 10–18, Lys-28, 137–142, and Asn-163 each bind ATP; these read TRTGDDGTT and RRAERS.

Belongs to the Cob(I)alamin adenosyltransferase family.

It is found in the cytoplasm. It carries out the reaction 2 cob(II)yrinate a,c diamide + reduced [electron-transfer flavoprotein] + 2 ATP = 2 adenosylcob(III)yrinate a,c-diamide + 2 triphosphate + oxidized [electron-transfer flavoprotein] + 3 H(+). The enzyme catalyses 2 cob(II)alamin + reduced [electron-transfer flavoprotein] + 2 ATP = 2 adenosylcob(III)alamin + 2 triphosphate + oxidized [electron-transfer flavoprotein] + 3 H(+). It participates in cofactor biosynthesis; adenosylcobalamin biosynthesis; adenosylcobalamin from cob(II)yrinate a,c-diamide: step 2/7. The chain is Corrinoid adenosyltransferase from Mycobacterium bovis (strain ATCC BAA-935 / AF2122/97).